Reading from the N-terminus, the 73-residue chain is Putative antitoxin VapB9 (73 aa).

Antitoxin component of a possible type II toxin-antitoxin (TA) system. The cognate toxin is VapC9. This is Putative antitoxin VapB9 (vapB9) from Mycobacterium tuberculosis (strain CDC 1551 / Oshkosh).